The primary structure comprises 623 residues: MHPGNVWGGSLDAVDSDRIAAEEEERLRNTTEWDRGAIHSQRSELDETQQGWLLAPQDNWRKKKKKYVNLGCVSVSRTVFLWTVGSIAVLFLVVALPIIIVKSLPRHKSAPPPPDNYTLALHKALQFFDAQKSGKLPKKNKVSWRGDSGTKDGLPDVVGGLVGGYYDGGSNVKFHFPMAFSMTMLSWSLIEYSHKYKAIDEYDHMRDVLKWGTDYLLLTFNNSATRLDHIYTQVGGGLRDSESPDDIYCWQKPEDMSYDRPVLSSTSAADLGAEVSAALAAASIVFTDKPDYAKKLKKGAETLYPFFRSKSRRKRYSDGQPTAQAFYNSTSMFDEFMWAGAWLYYATGNKTYIQFATTPSVPQTAKAFANRPELMVPSWNNKLPGAMLLMTRYRLFLNPGFPYENMLNRYHNATGITMCAYLKQYNVFNRTSGGLMQLNLGKPRPLEYVAHASFLASLFADYLNSTGVPGWYCGPTFVENHVLKDFAQSQIDYILGDNPLKMSYVVGFGKKFPRRVHHRGATIPNDKKRRSCREGLKYRDTKNPNPNNITGAMVGGPNKFDEFHDLRNNYNASEPTLSGNAGLVAALVSLTSSGGQQIDKNTMFNSVPPLYSPTPPPPKAWKP.

Residues 1–79 (MHPGNVWGGS…LGCVSVSRTV (79 aa)) lie on the Cytoplasmic side of the membrane. The chain crosses the membrane as a helical; Signal-anchor for type II membrane protein span at residues 80–100 (FLWTVGSIAVLFLVVALPIII). The Extracellular portion of the chain corresponds to 101–623 (VKSLPRHKSA…TPPPPKAWKP (523 aa)). N-linked (GlcNAc...) asparagine glycans are attached at residues Asn-116, Asn-221, Asn-328, Asn-349, Asn-412, Asn-429, and Asn-464. His-517 is an active-site residue. Asn-548 carries N-linked (GlcNAc...) asparagine glycosylation. The active site involves Asp-565. Asn-571 is a glycosylation site (N-linked (GlcNAc...) asparagine). Glu-574 is a catalytic residue.

Belongs to the glycosyl hydrolase 9 (cellulase E) family. As to expression, expressed in basal region of leaf blade and proximal parts of leaf and floral organ.

Its subcellular location is the membrane. It carries out the reaction Endohydrolysis of (1-&gt;4)-beta-D-glucosidic linkages in cellulose, lichenin and cereal beta-D-glucans.. The protein is Endoglucanase 7 (KOR2) of Arabidopsis thaliana (Mouse-ear cress).